Reading from the N-terminus, the 169-residue chain is Interleukin-36 gamma (169 aa).

Residues 1–17 (MRGTPGDADGGGRAVYQ) constitute a propeptide that is removed on maturation.

This sequence belongs to the IL-1 family. Interacts with cargo receptor TMED10; the interaction mediates the translocation from the cytoplasm into the ERGIC (endoplasmic reticulum-Golgi intermediate compartment) and thereby secretion. Post-translationally, N-terminal truncation leads to a dramatic enhancement of its activity (&gt;1000-fold). Proteolytically cleaved by cathepsin CTSG. Highly expressed in tissues containing epithelial cells: skin, lung, stomach and esophagus. Expressed in bronchial epithelial. In skin is expressed only in keratinocytes but not in fibroblasts, endothelial cells or melanocytes. Up-regulated in lesional psoriasis skin. Expressed in monocyte-derived dendritic cells and M1 macrophages.

It localises to the cytoplasm. It is found in the secreted. Its function is as follows. Cytokine that binds to and signals through the IL1RL2/IL-36R receptor which in turn activates NF-kappa-B and MAPK signaling pathways in target cells. Part of the IL-36 signaling system that is thought to be present in epithelial barriers and to take part in local inflammatory response; similar to the IL-1 system with which it shares the coreceptor IL1RAP. Seems to be involved in skin inflammatory response by acting on keratinocytes, dendritic cells and indirectly on T-cells to drive tissue infiltration, cell maturation and cell proliferation. In cultured keratinocytes induces the expression of macrophage, T-cell, and neutrophil chemokines, such as CCL3, CCL4, CCL5, CCL2, CCL17, CCL22, CL20, CCL5, CCL2, CCL17, CCL22, CXCL8, CCL20 and CXCL1; also stimulates its own expression and that of the prototypic cutaneous pro-inflammatory parameters TNF-alpha, S100A7/psoriasin and inducible NOS. May play a role in pro-inflammatory responses during particular neutrophilic airway inflammation: activates mitogen-activated protein kinases and NF-kappa B in primary lung fibroblasts, and stimulates the expression of IL-8 and CXCL3 and Th17 chemokine CCL20 in lung fibroblasts. May be involved in the innate immune response to fungal pathogens, such as Aspergillus fumigatus. This chain is Interleukin-36 gamma, found in Homo sapiens (Human).